A 279-amino-acid polypeptide reads, in one-letter code: Tryptophan synthase alpha chain (279 aa).

Active-site proton acceptor residues include E50 and D61.

The protein belongs to the TrpA family. As to quaternary structure, tetramer of two alpha and two beta chains.

The enzyme catalyses (1S,2R)-1-C-(indol-3-yl)glycerol 3-phosphate + L-serine = D-glyceraldehyde 3-phosphate + L-tryptophan + H2O. It functions in the pathway amino-acid biosynthesis; L-tryptophan biosynthesis; L-tryptophan from chorismate: step 5/5. Its function is as follows. The alpha subunit is responsible for the aldol cleavage of indoleglycerol phosphate to indole and glyceraldehyde 3-phosphate. The chain is Tryptophan synthase alpha chain from Brucella anthropi (strain ATCC 49188 / DSM 6882 / CCUG 24695 / JCM 21032 / LMG 3331 / NBRC 15819 / NCTC 12168 / Alc 37) (Ochrobactrum anthropi).